Consider the following 405-residue polypeptide: S-adenosylmethionine synthase (405 aa).

141–146 (GQGSVD) serves as a coordination point for ATP.

It belongs to the AdoMet synthase 2 family. Mg(2+) serves as cofactor.

It carries out the reaction L-methionine + ATP + H2O = S-adenosyl-L-methionine + phosphate + diphosphate. Its pathway is amino-acid biosynthesis; S-adenosyl-L-methionine biosynthesis; S-adenosyl-L-methionine from L-methionine: step 1/1. Functionally, catalyzes the formation of S-adenosylmethionine from methionine and ATP. In Methanococcus maripaludis (Methanococcus deltae), this protein is S-adenosylmethionine synthase.